Consider the following 277-residue polypeptide: MKLTGEVVLITGGASGLGRALVDRFVAERAKVAVLDKSAERLAQLETDHGDNVLGVTGDVRSLEDQKQAASRCVAKFGKIDTLIPNAGIWDYSTALIDLPEESLDAAFDEVFHINVKGYIHAVKACLPALVASRGNVIFTISNAGFYPNGGGPLYTAAKHAVVGLVRELAFELAPYVRVNGVGPGGINSDLRGPSSLGMGGKAISTVPLADMLKSVLPIGRMPEAEEYTGAYVFFATRGDAAPATGALLNYDGGLGVRGFFSGAGGNDLLERLNINS.

Residue 9-33 (LITGGASGLGRALVDRFVAERAKVA) participates in NAD(+) binding. Ser142 contacts substrate. Catalysis depends on Tyr155, which acts as the Proton acceptor.

The protein belongs to the short-chain dehydrogenases/reductases (SDR) family. In terms of assembly, homotetramer.

It carries out the reaction (2R,3S)-3-phenylcyclohexa-3,5-diene-1,2-diol + NAD(+) = biphenyl-2,3-diol + NADH + H(+). The protein operates within xenobiotic degradation; biphenyl degradation; 2-hydroxy-2,4-pentadienoate and benzoate from biphenyl: step 2/4. The sequence is that of Cis-2,3-dihydrobiphenyl-2,3-diol dehydrogenase (bphB) from Pseudomonas putida (Arthrobacter siderocapsulatus).